The following is a 135-amino-acid chain: Allatotropins (135 aa).

An N-terminal signal peptide occupies residues 1–22; it reads MNFSMHLVLAVAAAACLCVVTA. Phenylalanine 51 bears the Phenylalanine amide mark. The propeptide occupies 55–135; it reads DRPHTRAELY…SSEELLRNVA (81 aa).

In terms of tissue distribution, allatotropin: Expressed in corpora cardiaca (CC), corpora allata (CA), antennal lobe (AL) and gnathal ganglion (GNG) (protein level). Expression in AL detected in all animals, expression in GNG detected in most animals and expression in CA and CC detected in few animals (at protein level). Allatotropin-PP-1: Expressed in corpora cardiaca (CC), corpora allata (CA), antennal lobe (AL) and gnathal ganglion (GNG) (at protein level). Expression in AL detected in all animals and expression in GNG, CA and CC detected in some animals (at protein level).

The protein resides in the secreted. Functionally, neuropeptide stimulator of juvenile hormone synthesis. The protein is Allatotropins of Agrotis ipsilon (Black cutworm moth).